The sequence spans 273 residues: Glutamate 5-kinase (273 aa).

An ATP-binding site is contributed by Lys-15. Substrate contacts are provided by Ser-55, Asp-142, and Asn-158. Residues 178–179 (SD) and 220–226 (TGGMLSK) contribute to the ATP site.

This sequence belongs to the glutamate 5-kinase family.

Its subcellular location is the cytoplasm. It carries out the reaction L-glutamate + ATP = L-glutamyl 5-phosphate + ADP. Its pathway is amino-acid biosynthesis; L-proline biosynthesis; L-glutamate 5-semialdehyde from L-glutamate: step 1/2. Catalyzes the transfer of a phosphate group to glutamate to form L-glutamate 5-phosphate. The chain is Glutamate 5-kinase from Streptococcus pyogenes serotype M3 (strain ATCC BAA-595 / MGAS315).